The chain runs to 278 residues: MDIFPAPAKLNLFLHVIGRREDGYHLLQTVFRFIDHSDRLHFDITHDGVIRHENLIPGLTETDDLCVRAAKLLRQRFGRESLGVKIHLEKNIPLGGGLGGGSSDAATTLIALNRLWGINWKRERLMALGLELGADVPVFIYGRNAFAEGVGEELHAVDLPSAWYVVLTPPVQISTAAVFTSKELTRNTIPIKMAAFSMGQGHNDLEPVAMRMQPVIAGWLGWLKQQHGTTKVAMSGSGSCMFAEFPSESAAREVFGRLPGDMSGFVVSGLARHPLSDF.

The active site involves Lys-9. ATP is bound at residue 93-103; the sequence is PLGGGLGGGSS. Residue Asp-135 is part of the active site.

This sequence belongs to the GHMP kinase family. IspE subfamily.

It catalyses the reaction 4-CDP-2-C-methyl-D-erythritol + ATP = 4-CDP-2-C-methyl-D-erythritol 2-phosphate + ADP + H(+). Its pathway is isoprenoid biosynthesis; isopentenyl diphosphate biosynthesis via DXP pathway; isopentenyl diphosphate from 1-deoxy-D-xylulose 5-phosphate: step 3/6. Catalyzes the phosphorylation of the position 2 hydroxy group of 4-diphosphocytidyl-2C-methyl-D-erythritol. This Nitrosomonas europaea (strain ATCC 19718 / CIP 103999 / KCTC 2705 / NBRC 14298) protein is 4-diphosphocytidyl-2-C-methyl-D-erythritol kinase.